The sequence spans 221 residues: NAD(P)H-hydrate epimerase (221 aa).

The 201-residue stretch at 10–210 (MQQIDNYTIE…DVGMLIPDDF (201 aa)) folds into the YjeF N-terminal domain. Residue 58–62 (NNGAD) participates in (6S)-NADPHX binding. K(+) is bound by residues Asn59 and Asp120. (6S)-NADPHX contacts are provided by residues 124–130 (GVGLNNV) and Asp153. A K(+)-binding site is contributed by Thr156.

It belongs to the NnrE/AIBP family. Requires K(+) as cofactor.

The enzyme catalyses (6R)-NADHX = (6S)-NADHX. The catalysed reaction is (6R)-NADPHX = (6S)-NADPHX. In terms of biological role, catalyzes the epimerization of the S- and R-forms of NAD(P)HX, a damaged form of NAD(P)H that is a result of enzymatic or heat-dependent hydration. This is a prerequisite for the S-specific NAD(P)H-hydrate dehydratase to allow the repair of both epimers of NAD(P)HX. The protein is NAD(P)H-hydrate epimerase of Leuconostoc mesenteroides subsp. mesenteroides (strain ATCC 8293 / DSM 20343 / BCRC 11652 / CCM 1803 / JCM 6124 / NCDO 523 / NBRC 100496 / NCIMB 8023 / NCTC 12954 / NRRL B-1118 / 37Y).